A 300-amino-acid polypeptide reads, in one-letter code: DNA packaging protein OPG160 (300 aa).

The protein belongs to the orthopoxvirus OPG160 protein family. Interacts with protein OPG137.

Participates in viral DNA packaging and virion morphogenesis. The polypeptide is DNA packaging protein OPG160 (OPG160) (Monkeypox virus).